Consider the following 93-residue polypeptide: UPF0728 protein C10orf53 homolog (93 aa).

This sequence belongs to the UPF0728 family.

The chain is UPF0728 protein C10orf53 homolog from Mus musculus (Mouse).